Reading from the N-terminus, the 232-residue chain is 6-phosphogluconolactonase (232 aa).

It belongs to the glucosamine/galactosamine-6-phosphate isomerase family. 6-phosphogluconolactonase subfamily.

It carries out the reaction 6-phospho-D-glucono-1,5-lactone + H2O = 6-phospho-D-gluconate + H(+). The protein operates within carbohydrate degradation; pentose phosphate pathway; D-ribulose 5-phosphate from D-glucose 6-phosphate (oxidative stage): step 2/3. Its function is as follows. Hydrolysis of 6-phosphogluconolactone to 6-phosphogluconate. In Caulobacter vibrioides (strain ATCC 19089 / CIP 103742 / CB 15) (Caulobacter crescentus), this protein is 6-phosphogluconolactonase (pgl).